The primary structure comprises 155 residues: D-aminoacyl-tRNA deacylase (155 aa).

The short motif at glycine 137–proline 138 is the Gly-cisPro motif, important for rejection of L-amino acids element.

It belongs to the DTD family. Homodimer.

The protein resides in the cytoplasm. It catalyses the reaction glycyl-tRNA(Ala) + H2O = tRNA(Ala) + glycine + H(+). The enzyme catalyses a D-aminoacyl-tRNA + H2O = a tRNA + a D-alpha-amino acid + H(+). In terms of biological role, an aminoacyl-tRNA editing enzyme that deacylates mischarged D-aminoacyl-tRNAs. Also deacylates mischarged glycyl-tRNA(Ala), protecting cells against glycine mischarging by AlaRS. Acts via tRNA-based rather than protein-based catalysis; rejects L-amino acids rather than detecting D-amino acids in the active site. By recycling D-aminoacyl-tRNA to D-amino acids and free tRNA molecules, this enzyme counteracts the toxicity associated with the formation of D-aminoacyl-tRNA entities in vivo and helps enforce protein L-homochirality. The sequence is that of D-aminoacyl-tRNA deacylase from Roseiflexus sp. (strain RS-1).